The sequence spans 522 residues: Target of rapamycin complex 2 subunit MAPKAP1 (522 aa).

The residue at position 2 (alanine 2) is an N-acetylalanine. The segment at 2–184 is interaction with MAP3K2; the sequence is AFLDNPTIIL…KKIDVYLPLH (183 aa). Residues 2-267 are interaction with NBN; the sequence is AFLDNPTIIL…GFSTLALVEK (266 aa). The segment at 38–59 is disordered; that stretch reads LEKTHPPSVPGDSGSEVQGSSG. Threonine 86 carries the phosphothreonine modification. Phosphoserine is present on residues serine 128, serine 186, serine 315, and serine 356. The region spanning 139–267 is the CRIM domain; it reads QSILSVRLEQ…GFSTLALVEK (129 aa). Positions 279–353 are SIN1-type RBD; that stretch reads LFVRINAAHG…QNAWEFCLVR (75 aa). In terms of domain architecture, SIN1-type PH spans 382-487; it reads HYKSFKVSMI…IVLKVNYILE (106 aa). Arginine 393 provides a ligand contact to a 1,2-diacyl-sn-glycero-3-phospho-(1D-myo-inositol-3,4,5-trisphosphate). Phosphothreonine is present on threonine 398. A 1,2-diacyl-sn-glycero-3-phospho-(1D-myo-inositol-3,4,5-trisphosphate) is bound by residues lysine 428 and lysine 464. Residues 468–522 form an interaction with ATF2 region; that stretch reads FESDAATVSEIVLKVNYILESRASTARADYFAQKQRKLNRRTSFSFQKEKKSGQQ. Serine 510 is subject to Phosphoserine.

The protein belongs to the SIN1 family. In terms of assembly, component of the mechanistic target of rapamycin complex 2 (mTORC2), consisting in two heterotretramers composed of MTOR, MLST8, RICTOR and MAPKAP1/SIN1. The mTORC2 core complex associates with PRR5/PROTOR1 and/or PRR5L/PROTOR2. Contrary to mTORC1, mTORC2 does not bind to and is not sensitive to FKBP12-rapamycin. Interacts with MAP3K2. Interacts with ATF2. Interacts with MAPK8. Interacts with GTP-bound HRAS and KRAS; inhibiting their activity. Interacts with IFNAR2. Phosphorylation at Ser-128 by PKC promotes relocalization to the perinuclear region, where the mTORC2 complex specifically mediates phosphorylation of SGK1. Phosphorylated at Thr-86 by AKT1 or RPS6KB1 in the presence of growth factors; the effect of this phosphorylation is however unclear. According to two studies, phosphorylation at Thr-86 by AKT1 is part of a positive feedback loop that increases mTORC2 activation. According to another study, phosphorylation at Thr-86 and Thr-398 by RPS6KB1 promotes dissociation from the mTORC2 complex, leading to inhibit mTORC2 signaling.

It localises to the cell membrane. The protein localises to the endoplasmic reticulum membrane. Its subcellular location is the early endosome membrane. The protein resides in the late endosome membrane. It is found in the lysosome membrane. It localises to the golgi apparatus membrane. The protein localises to the mitochondrion outer membrane. Its subcellular location is the cytoplasm. The protein resides in the perinuclear region. It is found in the nucleus. Phosphatidylinositol 3,4,5-trisphosphate (PI(3,4,5)P3) promotes MTOR activation by relieving MAPKAP1/SIN1-mediated inhibition of MTOR that takes place in absence of PI(3,4,5)P3. Functionally, component of the mechanistic target of rapamycin complex 2 (mTORC2), which transduces signals from growth factors to pathways involved in proliferation, cytoskeletal organization, lipogenesis and anabolic output. In response to growth factors, mTORC2 phosphorylates and activates AGC protein kinase family members, including AKT (AKT1, AKT2 and AKT3), PKC (PRKCA, PRKCB and PRKCE) and SGK1. In contrast to mTORC1, mTORC2 is nutrient-insensitive. Within the mTORC2 complex, MAPKAP1/SIN1 acts as a substrate adapter which recognizes and binds AGC protein kinase family members for phosphorylation by MTOR. mTORC2 plays a critical role in AKT1 activation by mediating phosphorylation of different sites depending on the context, such as 'Thr-450', 'Ser-473', 'Ser-477' or 'Thr-479', facilitating the phosphorylation of the activation loop of AKT1 on 'Thr-308' by PDPK1/PDK1 which is a prerequisite for full activation. mTORC2 catalyzes the phosphorylation of SGK1 at 'Ser-422' and of PRKCA on 'Ser-657'. The mTORC2 complex also phosphorylates various proteins involved in insulin signaling, such as FBXW8 and IGF2BP1. mTORC2 acts upstream of Rho GTPases to regulate the actin cytoskeleton, probably by activating one or more Rho-type guanine nucleotide exchange factors. mTORC2 promotes the serum-induced formation of stress-fibers or F-actin. MAPKAP1 inhibits MAP3K2 by preventing its dimerization and autophosphorylation. Inhibits HRAS and KRAS independently of mTORC2 complex. Enhances osmotic stress-induced phosphorylation of ATF2 and ATF2-mediated transcription. Involved in ciliogenesis, regulates cilia length through its interaction with CCDC28B independently of mTORC2 complex. The polypeptide is Target of rapamycin complex 2 subunit MAPKAP1 (Rattus norvegicus (Rat)).